The chain runs to 1527 residues: uncharacterized protein (1527 aa).

4 coiled-coil regions span residues 262 to 293 (NVEI…NINE), 699 to 751 (QQQQ…SEKL), 905 to 932 (NNLN…ENQI), and 1217 to 1255 (KIIS…QKSS). Residues 683-734 (TNQEQEQDQQDQPPPPQQQQEQQQEQQQQQEQQQQQDQQQQDQQQDQQEKQQ) form a disordered region. The segment covering 700-728 (QQQEQQQEQQQQQEQQQQQDQQQQDQQQD) has biased composition (low complexity).

This is an uncharacterized protein from Dictyostelium discoideum (Social amoeba).